The primary structure comprises 449 residues: MSNLAKQKVSMVSLGCPKNLVDAEVMLGVLAQQGYEITMDEKEADVIIVNTCSFIKEAREESVDAILDLADRKSDGNCKTLVVAGCLPQRYQEELAKELPEVDILIGTGDYPRVAEILAEHHAGDAQIKYVGDPNYIYDEDLPRLNSSPGWYAYLKIGEGCSNCCTYCVIPSLRGPYRSRPVEALVAEAERLVKGGVRELILVSQDITRYGSDMDDTSSLAGLIRRLAAIEDLKWIRLLYAYPDGISDELIELFKTEPKLCNYLDIPIQHISDNVLQRMKRRSSEEQIRTLIARLRNEIPGITLRTSLIVGFPGETVDDFLNLTQFVEKAQFDRLGVFCYSREEGTPAAEMPDQVSERVKRERHRKLMKTQARVSFRRNRAMVGQTEQVIVEGYSEETELLLKGRTSRQAPDIDGQVYITSGHAEIGDIVACKITDSSDYDLVAEMIEE.

In terms of domain architecture, MTTase N-terminal spans 7–123 (QKVSMVSLGC…VAEILAEHHA (117 aa)). The [4Fe-4S] cluster site is built by C16, C52, C86, C161, C165, and C168. A Radical SAM core domain is found at 147–377 (SSPGWYAYLK…MKTQARVSFR (231 aa)). Residues 380 to 448 (RAMVGQTEQV…DYDLVAEMIE (69 aa)) enclose the TRAM domain.

Belongs to the methylthiotransferase family. RimO subfamily. It depends on [4Fe-4S] cluster as a cofactor.

It is found in the cytoplasm. It carries out the reaction L-aspartate(89)-[ribosomal protein uS12]-hydrogen + (sulfur carrier)-SH + AH2 + 2 S-adenosyl-L-methionine = 3-methylsulfanyl-L-aspartate(89)-[ribosomal protein uS12]-hydrogen + (sulfur carrier)-H + 5'-deoxyadenosine + L-methionine + A + S-adenosyl-L-homocysteine + 2 H(+). Its function is as follows. Catalyzes the methylthiolation of an aspartic acid residue of ribosomal protein uS12. The chain is Ribosomal protein uS12 methylthiotransferase RimO from Trichlorobacter lovleyi (strain ATCC BAA-1151 / DSM 17278 / SZ) (Geobacter lovleyi).